A 312-amino-acid polypeptide reads, in one-letter code: MGPAGLKVLLLLFLGAFQGSFTKKKNLQSVCGRPVHTGRIVGGQDAALGRWPWQVSLRFDYTHSCGGSLISDHWVLTAAHCIKKTWYSFLYSVWLGSIDREYSSTGKEYYVSRIAIPDKHRHTEADIALLKLSSRVTFSSVILPICLPNISKQLTVPASCWVTGWGQNQEGHYPSTLQELEVPVISSEACEQLYNPIGVFLPDLERVIKEDMFCAGERQSRKDSCKGDSGGPLSCHIDGVWRLMGVVSWGLECGKDLPGVYTNVTYYQKWISAIISRAPPGWGGDSTHMTSCSLLCYFLWLSWDPPEPLALA.

A signal peptide spans 1–22 (MGPAGLKVLLLLFLGAFQGSFT). Residues 40–276 (IVGGQDAALG…YQKWISAIIS (237 aa)) enclose the Peptidase S1 domain. Cysteine 65 and cysteine 81 are joined by a disulfide. Catalysis depends on charge relay system residues histidine 80 and aspartate 126. N-linked (GlcNAc...) asparagine glycosylation occurs at asparagine 149. 3 cysteine pairs are disulfide-bonded: cysteine 160-cysteine 235, cysteine 190-cysteine 214, and cysteine 225-cysteine 253. Serine 229 (charge relay system) is an active-site residue. A glycan (N-linked (GlcNAc...) asparagine) is linked at asparagine 263.

It belongs to the peptidase S1 family.

The protein localises to the secreted. The polypeptide is Serine protease 48 (Prss48) (Mus musculus (Mouse)).